A 444-amino-acid polypeptide reads, in one-letter code: ATP-dependent protease ATPase subunit HslU (444 aa).

ATP-binding positions include Ile-18 and 60–65 (GVGKTE). Residues 141-161 (DAWGNNEEGDNDSGTRQSFRK) are disordered. ATP is bound by residues Asp-257, Glu-322, and Arg-394.

It belongs to the ClpX chaperone family. HslU subfamily. In terms of assembly, a double ring-shaped homohexamer of HslV is capped on each side by a ring-shaped HslU homohexamer. The assembly of the HslU/HslV complex is dependent on binding of ATP.

Its subcellular location is the cytoplasm. Functionally, ATPase subunit of a proteasome-like degradation complex; this subunit has chaperone activity. The binding of ATP and its subsequent hydrolysis by HslU are essential for unfolding of protein substrates subsequently hydrolyzed by HslV. HslU recognizes the N-terminal part of its protein substrates and unfolds these before they are guided to HslV for hydrolysis. The sequence is that of ATP-dependent protease ATPase subunit HslU from Aliivibrio fischeri (strain MJ11) (Vibrio fischeri).